A 348-amino-acid polypeptide reads, in one-letter code: [FeFe] hydrogenase maturase subunit HydE (348 aa).

Residues 49–268 (DEVHIRAIIE…LLPDSNIPAT (220 aa)) form the Radical SAM core domain. Positions 63, 67, and 70 each coordinate [4Fe-4S] cluster. Positions 311, 319, and 322 each coordinate [2Fe-2S] cluster.

The protein belongs to the radical SAM superfamily. HydE family. In terms of assembly, monomer. Requires [4Fe-4S] cluster as cofactor. [2Fe-2S] cluster is required as a cofactor.

Its function is as follows. Required for the maturation of the [FeFe]-hydrogenase HydA. Catalyzes the reductive cleavage of S-adenosyl-L-methionine (in vitro), suggesting it may contribute to the biosynthesis of an essential sulfur-containing ligand that binds to the hydrogenase active site [2Fe-2S] cluster. The sequence is that of [FeFe] hydrogenase maturase subunit HydE from Thermotoga maritima (strain ATCC 43589 / DSM 3109 / JCM 10099 / NBRC 100826 / MSB8).